The primary structure comprises 553 residues: Formate--tetrahydrofolate ligase (553 aa).

62 to 69 (TPAGEGKS) is a binding site for ATP.

Belongs to the formate--tetrahydrofolate ligase family.

It carries out the reaction (6S)-5,6,7,8-tetrahydrofolate + formate + ATP = (6R)-10-formyltetrahydrofolate + ADP + phosphate. It participates in one-carbon metabolism; tetrahydrofolate interconversion. This chain is Formate--tetrahydrofolate ligase, found in Limosilactobacillus reuteri subsp. reuteri (strain JCM 1112) (Lactobacillus reuteri).